The chain runs to 899 residues: MEYHPQAIRLCALIFISFYALLHLVEAQDQKGFISLDCGSLPNEPPYNDPSTGLTYSTDDGFVQSGKTGRIQKAFESIFSKPSLKLRYFPDGFRNCYTLNVTQDTNYLIKAVFVYGNYDGLNNPPSFDLYLGPNLWVTVDMNGRTNGTIQEIIHKTISKSLQVCLVKTGTSSPMINTLELRPLKNNTYNTQSGSLKYFFRYYFSGSGQNIRYPDDVNDRKWYPFFDAKEWTELTTNLNINSSNGYAPPEVVMASASTPISTFGTWNFSWLLPSSTTQFYVYMHFAEIQTLRSLDTREFKVTLNGKLAYERYSPKTLATETIFYSTPQQCEDGTCLLELTKTPKSTLPPLMNALEVFTVIDFPQMETNPDDVAAIKSIQSTYGLSKISWQGDPCVPKQFLWEGLNCNNLDNSTPPIVTSLNLSSSHLTGIIAQGIQNLTHLQELDLSNNNLTGGIPEFLADIKSLLVINLSGNNFNGSIPQILLQKKGLKLILEGNANLICPDGLCVNKAGNGGAKKMNVVIPIVASVAFVVVLGSALAFFFIFKKKKTSNSQDLGPSSYTQVSEVRTIRSSESAIMTKNRRFTYSEVVTMTNNFERVLGKGGFGMVYHGTVNNTEQVAVKMLSHSSSQGYKEFKAEVELLLRVHHKNLVGLVGYCDEGENLALIYEYMANGDLREHMSGKRGGSILNWETRLKIVVESAQGLEYLHNGCKPPMVHRDVKTTNILLNEHLHAKLADFGLSRSFPIEGETHVSTVVAGTPGYLDPEYYRTNWLNEKSDVYSFGIVLLEIITNQLVINQSREKPHIAEWVGLMLTKGDIQNIMDPKLYGDYDSGSVWRAVELAMSCLNPSSARRPTMSQVVIELNECLSYENARGGTSQNMNSESSIEVSMNFDIGATPDAR.

Positions 1–27 (MEYHPQAIRLCALIFISFYALLHLVEA) are cleaved as a signal peptide. The Extracellular segment spans residues 28 to 522 (QDQKGFISLD…GAKKMNVVIP (495 aa)). N-linked (GlcNAc...) asparagine glycosylation is found at Asn100, Asn146, Asn185, Asn240, Asn266, Asn420, Asn436, Asn449, Asn468, and Asn475. 3 LRR repeats span residues 415–438 (IVTS…QNLT), 439–461 (HLQE…LADI), and 463–485 (SLLV…LLQK). The helical transmembrane segment at 523–543 (IVASVAFVVVLGSALAFFFIF) threads the bilayer. The Cytoplasmic portion of the chain corresponds to 544–899 (KKKKTSNSQD…FDIGATPDAR (356 aa)). Thr583 carries the phosphothreonine modification. One can recognise a Protein kinase domain in the interval 592 to 865 (NNFERVLGKG…QVVIELNECL (274 aa)). ATP-binding positions include 598–606 (LGKGGFGMV) and Lys620. Position 665 is a phosphotyrosine (Tyr665). Asp717 functions as the Proton acceptor in the catalytic mechanism. At Ser751 the chain carries Phosphoserine. 2 positions are modified to phosphothreonine: Thr752 and Thr757. Position 765 is a phosphotyrosine (Tyr765).

It belongs to the protein kinase superfamily. Ser/Thr protein kinase family. In terms of processing, autophosphorylated on Tyr and Thr residues.

The protein localises to the cell membrane. It catalyses the reaction L-seryl-[protein] + ATP = O-phospho-L-seryl-[protein] + ADP + H(+). The enzyme catalyses L-threonyl-[protein] + ATP = O-phospho-L-threonyl-[protein] + ADP + H(+). The catalysed reaction is L-tyrosyl-[protein] + ATP = O-phospho-L-tyrosyl-[protein] + ADP + H(+). Probable receptor with a dual specificity kinase activity acting on both serine/threonine- and tyrosine-containing substrates. The sequence is that of Receptor-like protein kinase At3g21340 from Arabidopsis thaliana (Mouse-ear cress).